The following is a 194-amino-acid chain: ATP-dependent Clp protease proteolytic subunit (194 aa).

Residue Ser97 is the Nucleophile of the active site. The active site involves His122.

This sequence belongs to the peptidase S14 family. As to quaternary structure, fourteen ClpP subunits assemble into 2 heptameric rings which stack back to back to give a disk-like structure with a central cavity, resembling the structure of eukaryotic proteasomes.

It localises to the cytoplasm. It catalyses the reaction Hydrolysis of proteins to small peptides in the presence of ATP and magnesium. alpha-casein is the usual test substrate. In the absence of ATP, only oligopeptides shorter than five residues are hydrolyzed (such as succinyl-Leu-Tyr-|-NHMec, and Leu-Tyr-Leu-|-Tyr-Trp, in which cleavage of the -Tyr-|-Leu- and -Tyr-|-Trp bonds also occurs).. In terms of biological role, cleaves peptides in various proteins in a process that requires ATP hydrolysis. Has a chymotrypsin-like activity. Plays a major role in the degradation of misfolded proteins. In Thermus thermophilus (strain ATCC BAA-163 / DSM 7039 / HB27), this protein is ATP-dependent Clp protease proteolytic subunit.